The following is a 347-amino-acid chain: Very-long-chain 3-oxoacyl-CoA reductase (347 aa).

Residues 20–40 (LLWVVFGLGVLKCTTLSLRFL) form a helical membrane-spanning segment. NADP(+)-binding residues include Val-66, Asp-120, Asn-147, Tyr-223, Lys-227, Val-256, and Ser-258. Catalysis depends on Tyr-223, which acts as the Proton donor. Lys-227 acts as the Lowers pKa of active site Tyr in catalysis.

Belongs to the short-chain dehydrogenases/reductases (SDR) family. Interacts with the fatty acid elongation system components ELO3 and TSC13.

It is found in the endoplasmic reticulum membrane. It carries out the reaction a very-long-chain (3R)-3-hydroxyacyl-CoA + NADP(+) = a very-long-chain 3-oxoacyl-CoA + NADPH + H(+). It participates in lipid metabolism; fatty acid biosynthesis. Component of the microsomal membrane bound fatty acid elongation system, which produces the 26-carbon very long-chain fatty acids (VLCFA) from palmitate. Catalyzes the reduction of the 3-ketoacyl-CoA intermediate that is formed in each cycle of fatty acid elongation. VLCFAs serve as precursors for ceramide and sphingolipids. In Saccharomyces cerevisiae (strain RM11-1a) (Baker's yeast), this protein is Very-long-chain 3-oxoacyl-CoA reductase.